A 196-amino-acid polypeptide reads, in one-letter code: MNEAVSPGALSTLFTDARTHNGWRETPVSDETLREIYALMKWGPTSANCSPARIVFIRTAEGKERLRPALSSGNLQKTLTAPVTAIVAWDSEFYERLPQLFPHGDARSWFTSSPQLAEETAFRNSSMQAAYLIVACRALGLDTGPMSGFDRQHVDDAFFTGSTLKSNLLINIGYGDSSKLYARLPRLSFEEACGLL.

Belongs to the nitroreductase family. HadB/RutE subfamily. The cofactor is FMN.

It carries out the reaction 3-hydroxypropanoate + NADP(+) = 3-oxopropanoate + NADPH + H(+). Functionally, may reduce toxic product malonic semialdehyde to 3-hydroxypropionic acid, which is excreted. The protein is Probable malonic semialdehyde reductase RutE of Escherichia coli O7:K1 (strain IAI39 / ExPEC).